Consider the following 370-residue polypeptide: Queuine tRNA-ribosyltransferase (370 aa).

The Proton acceptor role is filled by Asp89. Substrate-binding positions include 89–93 (DSGGF), Asp143, Gln187, and Gly214. Residues 245-251 (GVGTPED) are RNA binding. Asp264 acts as the Nucleophile in catalysis. An RNA binding; important for wobble base 34 recognition region spans residues 269-273 (TRNAR). 4 residues coordinate Zn(2+): Cys302, Cys304, Cys307, and His333.

Belongs to the queuine tRNA-ribosyltransferase family. As to quaternary structure, homodimer. Within each dimer, one monomer is responsible for RNA recognition and catalysis, while the other monomer binds to the replacement base PreQ1. Requires Zn(2+) as cofactor.

It carries out the reaction 7-aminomethyl-7-carbaguanine + guanosine(34) in tRNA = 7-aminomethyl-7-carbaguanosine(34) in tRNA + guanine. Its pathway is tRNA modification; tRNA-queuosine biosynthesis. Its function is as follows. Catalyzes the base-exchange of a guanine (G) residue with the queuine precursor 7-aminomethyl-7-deazaguanine (PreQ1) at position 34 (anticodon wobble position) in tRNAs with GU(N) anticodons (tRNA-Asp, -Asn, -His and -Tyr). Catalysis occurs through a double-displacement mechanism. The nucleophile active site attacks the C1' of nucleotide 34 to detach the guanine base from the RNA, forming a covalent enzyme-RNA intermediate. The proton acceptor active site deprotonates the incoming PreQ1, allowing a nucleophilic attack on the C1' of the ribose to form the product. After dissociation, two additional enzymatic reactions on the tRNA convert PreQ1 to queuine (Q), resulting in the hypermodified nucleoside queuosine (7-(((4,5-cis-dihydroxy-2-cyclopenten-1-yl)amino)methyl)-7-deazaguanosine). In Azoarcus sp. (strain BH72), this protein is Queuine tRNA-ribosyltransferase.